The following is a 482-amino-acid chain: Probable glycine dehydrogenase (decarboxylating) subunit 2 (482 aa).

Lysine 264 is modified (N6-(pyridoxal phosphate)lysine).

Belongs to the GcvP family. C-terminal subunit subfamily. As to quaternary structure, the glycine cleavage system is composed of four proteins: P, T, L and H. In this organism, the P 'protein' is a heterodimer of two subunits. Pyridoxal 5'-phosphate is required as a cofactor.

The enzyme catalyses N(6)-[(R)-lipoyl]-L-lysyl-[glycine-cleavage complex H protein] + glycine + H(+) = N(6)-[(R)-S(8)-aminomethyldihydrolipoyl]-L-lysyl-[glycine-cleavage complex H protein] + CO2. Functionally, the glycine cleavage system catalyzes the degradation of glycine. The P protein binds the alpha-amino group of glycine through its pyridoxal phosphate cofactor; CO(2) is released and the remaining methylamine moiety is then transferred to the lipoamide cofactor of the H protein. This chain is Probable glycine dehydrogenase (decarboxylating) subunit 2, found in Treponema denticola (strain ATCC 35405 / DSM 14222 / CIP 103919 / JCM 8153 / KCTC 15104).